Consider the following 426-residue polypeptide: Serine--tRNA ligase (426 aa).

Residue 231–233 (TAE) coordinates L-serine. Residues 262 to 264 (RRE) and V278 contribute to the ATP site. Residue E285 participates in L-serine binding. 349-352 (EVSS) contributes to the ATP binding site. S384 contacts L-serine.

The protein belongs to the class-II aminoacyl-tRNA synthetase family. Type-1 seryl-tRNA synthetase subfamily. As to quaternary structure, homodimer. The tRNA molecule binds across the dimer.

It is found in the cytoplasm. It carries out the reaction tRNA(Ser) + L-serine + ATP = L-seryl-tRNA(Ser) + AMP + diphosphate + H(+). The catalysed reaction is tRNA(Sec) + L-serine + ATP = L-seryl-tRNA(Sec) + AMP + diphosphate + H(+). It functions in the pathway aminoacyl-tRNA biosynthesis; selenocysteinyl-tRNA(Sec) biosynthesis; L-seryl-tRNA(Sec) from L-serine and tRNA(Sec): step 1/1. Functionally, catalyzes the attachment of serine to tRNA(Ser). Is also able to aminoacylate tRNA(Sec) with serine, to form the misacylated tRNA L-seryl-tRNA(Sec), which will be further converted into selenocysteinyl-tRNA(Sec). The chain is Serine--tRNA ligase from Chlamydia caviae (strain ATCC VR-813 / DSM 19441 / 03DC25 / GPIC) (Chlamydophila caviae).